Reading from the N-terminus, the 205-residue chain is MNEQLHNRTMAFAGILQAIAQVQHLARHGESDTDELAASLNTILVTNPESAADVYQDKAALHKGYQLVLNQLGDSSQKDVEITRYLVGILALERKLTRSNSGLAMLAERINQVNRQLHHFAITDEQVIANLASIYSDIISNLGPKIQISGNPLCLQRPIVQHKIRALLLAAMRSAVLWRQLGGKRRHLVFARKAIIDTAKKSLTL.

Belongs to the HflD family.

It is found in the cytoplasm. The protein localises to the cell inner membrane. This chain is High frequency lysogenization protein HflD homolog, found in Shewanella sp. (strain MR-4).